We begin with the raw amino-acid sequence, 208 residues long: Uracil phosphoribosyltransferase (208 aa).

Residues R78, R103, and 130 to 138 (DPMLATGGS) each bind 5-phospho-alpha-D-ribose 1-diphosphate. Uracil is bound by residues I193 and 198 to 200 (GDA). D199 is a binding site for 5-phospho-alpha-D-ribose 1-diphosphate.

This sequence belongs to the UPRTase family. Mg(2+) serves as cofactor.

The enzyme catalyses UMP + diphosphate = 5-phospho-alpha-D-ribose 1-diphosphate + uracil. It participates in pyrimidine metabolism; UMP biosynthesis via salvage pathway; UMP from uracil: step 1/1. Its activity is regulated as follows. Allosterically activated by GTP. Catalyzes the conversion of uracil and 5-phospho-alpha-D-ribose 1-diphosphate (PRPP) to UMP and diphosphate. The protein is Uracil phosphoribosyltransferase of Aliivibrio salmonicida (strain LFI1238) (Vibrio salmonicida (strain LFI1238)).